Here is a 157-residue protein sequence, read N- to C-terminus: uncharacterized protein (157 aa).

4 consecutive transmembrane segments (helical) span residues 3 to 23, 24 to 44, 47 to 67, and 105 to 125; these read IFSFFSADFWQANSLCFMFIS, AFLSATVLPGNSEVIFVALAV, LMLGSLFNVDILALILIATAG, and IALLLSWLPVVGDLFCAIAGW.

To E.coli YqaA.

The protein localises to the cell membrane. This is an uncharacterized protein from Haemophilus influenzae (strain ATCC 51907 / DSM 11121 / KW20 / Rd).